The sequence spans 1331 residues: DNA-directed RNA polymerase subunit beta' (1331 aa).

Zn(2+) is bound by residues C60, C62, C75, and C78. The Mg(2+) site is built by D535, D537, and D539. Zn(2+) contacts are provided by C902, C979, C986, and C989.

This sequence belongs to the RNA polymerase beta' chain family. In terms of assembly, the RNAP catalytic core consists of 2 alpha, 1 beta, 1 beta' and 1 omega subunit. When a sigma factor is associated with the core the holoenzyme is formed, which can initiate transcription. The cofactor is Mg(2+). Requires Zn(2+) as cofactor.

It carries out the reaction RNA(n) + a ribonucleoside 5'-triphosphate = RNA(n+1) + diphosphate. Functionally, DNA-dependent RNA polymerase catalyzes the transcription of DNA into RNA using the four ribonucleoside triphosphates as substrates. The polypeptide is DNA-directed RNA polymerase subunit beta' (Corynebacterium aurimucosum (strain ATCC 700975 / DSM 44827 / CIP 107346 / CN-1) (Corynebacterium nigricans)).